The following is a 153-amino-acid chain: Aspartate carbamoyltransferase regulatory chain (153 aa).

4 residues coordinate Zn(2+): Cys109, Cys114, Cys138, and Cys141.

The protein belongs to the PyrI family. As to quaternary structure, contains catalytic and regulatory chains. Zn(2+) is required as a cofactor.

In terms of biological role, involved in allosteric regulation of aspartate carbamoyltransferase. This is Aspartate carbamoyltransferase regulatory chain from Escherichia coli O7:K1 (strain IAI39 / ExPEC).